The sequence spans 449 residues: MGRSRYHNKLKEGIFEAEITALSHDGRGIAKVDGKTTFIPFTLPGEVVKFEYTFTKAKFDEAKVVEYVKKSLNRVNPPCDHFQICGGCSLQHMSTDAQIEHKQQTLINQLKYIGNGVEPENILPPLRTSNTEGYRNKARLGVRYVSKKGKILVGFRERNGRFLADIDKCIVLNPLVGDKITEISSFIETLSIYQHIAQLEIAIDDTRPAMIVRHLEPFTNEDLEKLRSFAQENNYWIYLQSKGPDTIFRLYPQGDVEPKKLSYQPAAGIDIGFEPNDFTQVNNDINKKMIKRAIELLDISENDSIIDLFCGLGNFTLPISQHAKTVIGVEGEPTMVKRAKETADNNNITNVNFYAANLFESFEDKEWFNNFEYNKMLLDPPRAGAQEVCNNIEKFNVKRIVYVSCDTAALARDAGILVNTKGYKLISAGVMDMFPHTMHVESIAVFEKI.

A TRAM domain is found at 1 to 66; the sequence is MGRSRYHNKL…AKFDEAKVVE (66 aa). Cys79, Cys85, Cys88, and Cys169 together coordinate [4Fe-4S] cluster. Gln280, Phe309, Asn314, Glu330, Asn357, and Asp379 together coordinate S-adenosyl-L-methionine. The active-site Nucleophile is Cys405.

Belongs to the class I-like SAM-binding methyltransferase superfamily. RNA M5U methyltransferase family. RlmD subfamily.

It catalyses the reaction uridine(1939) in 23S rRNA + S-adenosyl-L-methionine = 5-methyluridine(1939) in 23S rRNA + S-adenosyl-L-homocysteine + H(+). Functionally, catalyzes the formation of 5-methyl-uridine at position 1939 (m5U1939) in 23S rRNA. The protein is 23S rRNA (uracil(1939)-C(5))-methyltransferase RlmD of Francisella tularensis subsp. holarctica (strain LVS).